A 694-amino-acid polypeptide reads, in one-letter code: DNA ligase (694 aa).

NAD(+) is bound by residues 41–45 (DAEFD), 91–92 (SL), and glutamate 121. The N6-AMP-lysine intermediate role is filled by lysine 123. NAD(+)-binding residues include arginine 144, glutamate 184, lysine 300, and lysine 324. Zn(2+) is bound by residues cysteine 418, cysteine 421, cysteine 437, and cysteine 443. In terms of domain architecture, BRCT spans 607 to 694 (SVLPTCEGLT…QGPPVQQVVD (88 aa)).

The protein belongs to the NAD-dependent DNA ligase family. LigA subfamily. It depends on Mg(2+) as a cofactor. Requires Mn(2+) as cofactor.

The catalysed reaction is NAD(+) + (deoxyribonucleotide)n-3'-hydroxyl + 5'-phospho-(deoxyribonucleotide)m = (deoxyribonucleotide)n+m + AMP + beta-nicotinamide D-nucleotide.. In terms of biological role, DNA ligase that catalyzes the formation of phosphodiester linkages between 5'-phosphoryl and 3'-hydroxyl groups in double-stranded DNA using NAD as a coenzyme and as the energy source for the reaction. It is essential for DNA replication and repair of damaged DNA. This chain is DNA ligase, found in Mycobacterium leprae (strain TN).